Here is a 239-residue protein sequence, read N- to C-terminus: Uridylate kinase (239 aa).

Residue 13–16 coordinates ATP; the sequence is KLSG. Position 55 (glycine 55) interacts with UMP. ATP-binding residues include glycine 56 and arginine 60. Residues aspartate 75 and 136–143 each bind UMP; that span reads TGNPFFTT. ATP-binding residues include threonine 163, asparagine 164, tyrosine 169, and aspartate 172.

This sequence belongs to the UMP kinase family. Homohexamer.

It localises to the cytoplasm. It catalyses the reaction UMP + ATP = UDP + ADP. The protein operates within pyrimidine metabolism; CTP biosynthesis via de novo pathway; UDP from UMP (UMPK route): step 1/1. Inhibited by UTP. Functionally, catalyzes the reversible phosphorylation of UMP to UDP. This chain is Uridylate kinase, found in Neisseria meningitidis serogroup C / serotype 2a (strain ATCC 700532 / DSM 15464 / FAM18).